A 559-amino-acid chain; its full sequence is MSNKNNDELQRQASENTLGLNPVIGIRRKDLLSSARTVLRQAVRQPLHSAKHVAHFGLELKNVLLGKSSLAPESDDRRFNDPAWSNNPLYRRYLQTYLAWRKELQDWIGNSDLSPQDISRGQFVINLMTEAMAPTNTLSNPAAVKRFFETGGKSLLDGLSNLAKDLVNNGGMPSQVNMDAFEVGKNLGTSEGAVVYRNDVLELIQYKPITEQVHARPLLVVPPQINKFYVFDLSPEKSLARYCLRSQQQTFIISWRNPTKAQREWGLSTYIDALKEAVDAVLAITGSKDLNMLGACSGGITCTALVGHYAALGENKVNALTLLVSVLDTTMDNQVALFVDEQTLEAAKRHSYQAGVLEGSEMAKVFAWMRPNDLIWNYWVNNYLLGNEPPVFDILFWNNDTTRLPAAFHGDLIEMFKSNPLTRPDALEVCGTPIDLKQVKCDIYSLAGTNDHITPWQSCYRSAHLFGGKIEFVLSNSGHIQSILNPPGNPKARFMTGADRPGDPVAWQENATKHADSWWLHWQSWLGERAGELEKAPTRLGNRAYAAGEASPGTYVHER.

Cys-296 is a catalytic residue.

The protein belongs to the PHA/PHB synthase family. Type II PhaC subfamily.

It functions in the pathway biopolymer metabolism; poly-(R)-3-hydroxybutanoate biosynthesis. Synthesizes poly(3-hydroxyalkanoates) (PHA), complements a mutant of P.putida that does not make PHA. This Ectopseudomonas oleovorans (Pseudomonas oleovorans) protein is Poly(3-hydroxyalkanoate) polymerase 1.